A 238-amino-acid polypeptide reads, in one-letter code: Large ribosomal subunit protein uL1 (238 aa).

It belongs to the universal ribosomal protein uL1 family. Part of the 50S ribosomal subunit.

In terms of biological role, binds directly to 23S rRNA. The L1 stalk is quite mobile in the ribosome, and is involved in E site tRNA release. Protein L1 is also a translational repressor protein, it controls the translation of the L11 operon by binding to its mRNA. The protein is Large ribosomal subunit protein uL1 of Frankia alni (strain DSM 45986 / CECT 9034 / ACN14a).